Here is a 326-residue protein sequence, read N- to C-terminus: Tetraacyldisaccharide 4'-kinase (326 aa).

55–62 (TVGGNGKT) contacts ATP.

The protein belongs to the LpxK family.

The catalysed reaction is a lipid A disaccharide + ATP = a lipid IVA + ADP + H(+). It participates in glycolipid biosynthesis; lipid IV(A) biosynthesis; lipid IV(A) from (3R)-3-hydroxytetradecanoyl-[acyl-carrier-protein] and UDP-N-acetyl-alpha-D-glucosamine: step 6/6. Its function is as follows. Transfers the gamma-phosphate of ATP to the 4'-position of a tetraacyldisaccharide 1-phosphate intermediate (termed DS-1-P) to form tetraacyldisaccharide 1,4'-bis-phosphate (lipid IVA). This is Tetraacyldisaccharide 4'-kinase from Tolumonas auensis (strain DSM 9187 / NBRC 110442 / TA 4).